Here is an 81-residue protein sequence, read N- to C-terminus: MATKKSGGSSRNGRDSKGRRLGVKLFGGEYATIGSIIVRQRGTKILPYKNVGLGRDHTIFALKEGIVSYYKDKTKTYVSIV.

Over residues 1 to 11 (MATKKSGGSSR) the composition is skewed to polar residues. A disordered region spans residues 1–20 (MATKKSGGSSRNGRDSKGRR).

It belongs to the bacterial ribosomal protein bL27 family.

The protein localises to the mitochondrion. The polypeptide is Large ribosomal subunit protein bL27m (RPL27) (Reclinomonas americana).